The following is a 127-amino-acid chain: Large ribosomal subunit protein uL24 (127 aa).

This sequence belongs to the universal ribosomal protein uL24 family. Part of the 50S ribosomal subunit.

Its function is as follows. One of two assembly initiator proteins, it binds directly to the 5'-end of the 23S rRNA, where it nucleates assembly of the 50S subunit. Functionally, one of the proteins that surrounds the polypeptide exit tunnel on the outside of the subunit. This is Large ribosomal subunit protein uL24 from Leptospira biflexa serovar Patoc (strain Patoc 1 / ATCC 23582 / Paris).